Consider the following 131-residue polypeptide: Fatty acid-binding protein (131 aa).

(5Z,8Z,11Z,14Z)-eicosatetraenoate contacts are provided by residues arginine 106 and 126-128 (RFY). (9Z)-octadecenoate contacts are provided by residues arginine 106 and 126–128 (RFY).

It belongs to the calycin superfamily. Fatty-acid binding protein (FABP) family.

The protein resides in the cytoplasm. Functionally, FABPs are thought to play a role in the intracellular transport of long-chain fatty acids and their acyl-CoA esters. The protein is Fatty acid-binding protein of Tyrophagus putrescentiae (Mold mite).